Consider the following 597-residue polypeptide: Cysteine/serine-rich nuclear protein 3 (597 aa).

Disordered stretches follow at residues 22–64 (EDVD…TPSS) and 348–407 (CQGD…GFVE). Over residues 42-52 (SSESADSGDSV) the composition is skewed to low complexity. Over residues 53-64 (NPSTSNHFTPSS) the composition is skewed to polar residues. Residues 348–359 (CQGDEEEEEEDG) show a composition bias toward acidic residues. The span at 361 to 376 (SFCSGATDSSTQSLAP) shows a compositional bias: polar residues. The segment covering 378 to 401 (ESDEEEEEEEEEEEEEEEDDDDDK) has biased composition (acidic residues).

Belongs to the AXUD1 family. As to expression, detected only in the brain of 15 dpc, 18 dpc, newborn and P6 mice (at protein level).

Its subcellular location is the nucleus. In terms of biological role, binds to the consensus sequence 5'-AGAGTG-3' and has transcriptional activator activity. Plays a role in apoptosis. This is Cysteine/serine-rich nuclear protein 3 (Csrnp3) from Mus musculus (Mouse).